The following is a 229-amino-acid chain: Enolase-phosphatase E1 (229 aa).

The interval 207-229 (RDPASHHPQVQRFDDIHPEQIPA) is disordered. A compositionally biased stretch (basic and acidic residues) spans 218–229 (RFDDIHPEQIPA).

The protein belongs to the HAD-like hydrolase superfamily. MasA/MtnC family. Monomer. Requires Mg(2+) as cofactor.

The catalysed reaction is 5-methylsulfanyl-2,3-dioxopentyl phosphate + H2O = 1,2-dihydroxy-5-(methylsulfanyl)pent-1-en-3-one + phosphate. The protein operates within amino-acid biosynthesis; L-methionine biosynthesis via salvage pathway; L-methionine from S-methyl-5-thio-alpha-D-ribose 1-phosphate: step 3/6. Its pathway is amino-acid biosynthesis; L-methionine biosynthesis via salvage pathway; L-methionine from S-methyl-5-thio-alpha-D-ribose 1-phosphate: step 4/6. Functionally, bifunctional enzyme that catalyzes the enolization of 2,3-diketo-5-methylthiopentyl-1-phosphate (DK-MTP-1-P) into the intermediate 2-hydroxy-3-keto-5-methylthiopentenyl-1-phosphate (HK-MTPenyl-1-P), which is then dephosphorylated to form the acireductone 1,2-dihydroxy-3-keto-5-methylthiopentene (DHK-MTPene). The chain is Enolase-phosphatase E1 from Klebsiella pneumoniae (strain 342).